Consider the following 63-residue polypeptide: Cytochrome c oxidase subunit 7C, mitochondrial (63 aa).

Residues M1–R16 constitute a mitochondrion transit peptide. At S17 to N33 the chain is on the mitochondrial matrix side. K25 is subject to N6-acetyllysine; alternate. At K25 the chain carries N6-succinyllysine; alternate. Residues K34–L60 traverse the membrane as a helical segment. At L61–K63 the chain is on the mitochondrial intermembrane side.

The protein belongs to the cytochrome c oxidase VIIc family. In terms of assembly, component of the cytochrome c oxidase (complex IV, CIV), a multisubunit enzyme composed of 14 subunits. The complex is composed of a catalytic core of 3 subunits MT-CO1, MT-CO2 and MT-CO3, encoded in the mitochondrial DNA, and 11 supernumerary subunits COX4I, COX5A, COX5B, COX6A, COX6B, COX6C, COX7A, COX7B, COX7C, COX8 and NDUFA4, which are encoded in the nuclear genome. The complex exists as a monomer or a dimer and forms supercomplexes (SCs) in the inner mitochondrial membrane with NADH-ubiquinone oxidoreductase (complex I, CI) and ubiquinol-cytochrome c oxidoreductase (cytochrome b-c1 complex, complex III, CIII), resulting in different assemblies (supercomplex SCI(1)III(2)IV(1) and megacomplex MCI(2)III(2)IV(2)). Interacts with RAB5IF.

The protein resides in the mitochondrion inner membrane. Its pathway is energy metabolism; oxidative phosphorylation. Its function is as follows. Component of the cytochrome c oxidase, the last enzyme in the mitochondrial electron transport chain which drives oxidative phosphorylation. The respiratory chain contains 3 multisubunit complexes succinate dehydrogenase (complex II, CII), ubiquinol-cytochrome c oxidoreductase (cytochrome b-c1 complex, complex III, CIII) and cytochrome c oxidase (complex IV, CIV), that cooperate to transfer electrons derived from NADH and succinate to molecular oxygen, creating an electrochemical gradient over the inner membrane that drives transmembrane transport and the ATP synthase. Cytochrome c oxidase is the component of the respiratory chain that catalyzes the reduction of oxygen to water. Electrons originating from reduced cytochrome c in the intermembrane space (IMS) are transferred via the dinuclear copper A center (CU(A)) of subunit 2 and heme A of subunit 1 to the active site in subunit 1, a binuclear center (BNC) formed by heme A3 and copper B (CU(B)). The BNC reduces molecular oxygen to 2 water molecules using 4 electrons from cytochrome c in the IMS and 4 protons from the mitochondrial matrix. This chain is Cytochrome c oxidase subunit 7C, mitochondrial (Cox7c), found in Rattus norvegicus (Rat).